The sequence spans 99 residues: RNA-binding protein Hfq (99 aa).

The Sm domain occupies 9 to 68 (DPYLNALRRERIPVSIYLVNGIKLQGQIESFDQFVILLKNTVNQMVYKHAISTVVPARSV). The interval 67–99 (SVSHHNNNAQQQYQQQAAQAASAQSNETSSQAE) is disordered. Residues 72–99 (NNNAQQQYQQQAAQAASAQSNETSSQAE) show a composition bias toward low complexity.

The protein belongs to the Hfq family. In terms of assembly, homohexamer.

Its function is as follows. RNA chaperone that binds small regulatory RNA (sRNAs) and mRNAs to facilitate mRNA translational regulation in response to envelope stress, environmental stress and changes in metabolite concentrations. Also binds with high specificity to tRNAs. This is RNA-binding protein Hfq from Actinobacillus succinogenes (strain ATCC 55618 / DSM 22257 / CCUG 43843 / 130Z).